Consider the following 660-residue polypeptide: Polycomb protein SCMH1 (660 aa).

2 MBT repeats span residues 28–126 (FTWD…LQPP) and 134–235 (SSWP…LQPP). The disordered stretch occupies residues 233 to 345 (QPPGTKVVIP…EPDTSTVPQD (113 aa)). Basic residues-rich tracts occupy residues 273-284 (RGRKPGKKRGRT) and 305-320 (FPKKRGPKPGSKRKPR). Residues 330-343 (PTTSTPEPDTSTVP) show a composition bias toward low complexity. The SAM domain maps to 593–658 (WTVEDVMQFV…SYHIDRLKQG (66 aa)).

The protein belongs to the SCM family. In terms of assembly, interacts with the SAM domain of PHC1 via its SAM domain in vitro. Associates with a PRC1-like complex. As to expression, strongly expressed in heart, muscle and pancreas. Weakly expressed in brain, placenta, lung, liver and kidney.

The protein localises to the nucleus. Associates with Polycomb group (PcG) multiprotein complexes; the complex class is required to maintain the transcriptionally repressive state of some genes. The chain is Polycomb protein SCMH1 from Homo sapiens (Human).